The primary structure comprises 275 residues: NH(3)-dependent NAD(+) synthetase (275 aa).

46–53 (GISGGQDS) is a binding site for ATP. Residue D52 coordinates Mg(2+). A deamido-NAD(+)-binding site is contributed by R140. ATP is bound at residue T160. E165 lines the Mg(2+) pocket. K173 and D180 together coordinate deamido-NAD(+). Residues K189 and T211 each contribute to the ATP site. 260–261 (HK) contacts deamido-NAD(+).

This sequence belongs to the NAD synthetase family. Homodimer.

It carries out the reaction deamido-NAD(+) + NH4(+) + ATP = AMP + diphosphate + NAD(+) + H(+). It participates in cofactor biosynthesis; NAD(+) biosynthesis; NAD(+) from deamido-NAD(+) (ammonia route): step 1/1. In terms of biological role, catalyzes the ATP-dependent amidation of deamido-NAD to form NAD. Uses ammonia as a nitrogen source. In Escherichia coli O157:H7, this protein is NH(3)-dependent NAD(+) synthetase.